We begin with the raw amino-acid sequence, 358 residues long: 2-oxoisovalerate dehydrogenase subunit beta 2, mitochondrial (358 aa).

A mitochondrion-targeting transit peptide spans 1–16; it reads MAAALVRRFCRGSSFP. Y119 is a thiamine diphosphate binding site. Residues G145, L147, T148, D198, and N200 each contribute to the K(+) site.

As to quaternary structure, heterotetramer of alpha and beta chains. Thiamine diphosphate is required as a cofactor. In terms of tissue distribution, expressed in the non-photosynthetic organs such as siliques, flowers and roots.

Its subcellular location is the mitochondrion matrix. It carries out the reaction N(6)-[(R)-lipoyl]-L-lysyl-[protein] + 3-methyl-2-oxobutanoate + H(+) = N(6)-[(R)-S(8)-2-methylpropanoyldihydrolipoyl]-L-lysyl-[protein] + CO2. Functionally, the branched-chain alpha-keto dehydrogenase complex catalyzes the overall conversion of alpha-keto acids to acyl-CoA and CO(2). It contains multiple copies of three enzymatic components: branched-chain alpha-keto acid decarboxylase (E1), lipoamide acyltransferase (E2) and lipoamide dehydrogenase (E3). Required during sugar starvation and acts under the control of a sugar-sensing mechanism involving Ser/Thr kinases and phosphatases. The polypeptide is 2-oxoisovalerate dehydrogenase subunit beta 2, mitochondrial (DIN4) (Arabidopsis thaliana (Mouse-ear cress)).